Reading from the N-terminus, the 482-residue chain is ATP synthase subunit beta (482 aa).

Residue 161–168 (GGAGVGKT) coordinates ATP.

This sequence belongs to the ATPase alpha/beta chains family. F-type ATPases have 2 components, CF(1) - the catalytic core - and CF(0) - the membrane proton channel. CF(1) has five subunits: alpha(3), beta(3), gamma(1), delta(1), epsilon(1). CF(0) has three main subunits: a(1), b(2) and c(9-12). The alpha and beta chains form an alternating ring which encloses part of the gamma chain. CF(1) is attached to CF(0) by a central stalk formed by the gamma and epsilon chains, while a peripheral stalk is formed by the delta and b chains.

Its subcellular location is the cell inner membrane. The catalysed reaction is ATP + H2O + 4 H(+)(in) = ADP + phosphate + 5 H(+)(out). Functionally, produces ATP from ADP in the presence of a proton gradient across the membrane. The catalytic sites are hosted primarily by the beta subunits. The protein is ATP synthase subunit beta of Solibacter usitatus (strain Ellin6076).